Consider the following 750-residue polypeptide: uncharacterized protein (750 aa).

This is an uncharacterized protein from Escherichia coli O157:H7.